The sequence spans 591 residues: MLKSISSSSGDDHLLSLIVSSTGKLHLRQIHALLLRTSLIRNSDVFHHFLSRLALSLIPRDINYSCRVFSQRLNPTLSHCNTMIRAFSLSQTPCEGFRLFRSLRRNSSLPANPLSSSFALKCCIKSGDLLGGLQIHGKIFSDGFLSDSLLMTTLMDLYSTCENSTDACKVFDEIPKRDTVSWNVLFSCYLRNKRTRDVLVLFDKMKNDVDGCVKPDGVTCLLALQACANLGALDFGKQVHDFIDENGLSGALNLSNTLVSMYSRCGSMDKAYQVFYGMRERNVVSWTALISGLAMNGFGKEAIEAFNEMLKFGISPEEQTLTGLLSACSHSGLVAEGMMFFDRMRSGEFKIKPNLHHYGCVVDLLGRARLLDKAYSLIKSMEMKPDSTIWRTLLGACRVHGDVELGERVISHLIELKAEEAGDYVLLLNTYSTVGKWEKVTELRSLMKEKRIHTKPGCSAIELQGTVHEFIVDDVSHPRKEEIYKMLAEINQQLKIAGYVAEITSELHNLESEEEKGYALRYHSEKLAIAFGILVTPPGTTIRVTKNLRTCVDCHNFAKFVSDVYDRIVIVRDRSRFHHFKGGSCSCNDFW.

PPR repeat units follow at residues 76–110, 112–146, 147–177, 178–208, 216–250, 251–281, 282–316, 317–351, and 354–384; these read TLSH…SSLP, NPLS…GFLS, DSLL…IPKR, DTVS…MKND, DGVT…GLSG, ALNL…MRER, NVVS…GISP, EEQT…EFKI, and NLHH…MEMK. The type E motif stretch occupies residues 389 to 464; it reads IWRTLLGACR…KPGCSAIELQ (76 aa). Residues 465-495 are type E(+) motif; it reads GTVHEFIVDDVSHPRKEEIYKMLAEINQQLK. The interval 496–591 is type DYW motif; the sequence is IAGYVAEITS…GGSCSCNDFW (96 aa).

This sequence belongs to the PPR family. PCMP-H subfamily.

The polypeptide is Pentatricopeptide repeat-containing protein At3g47530 (PCMP-H76) (Arabidopsis thaliana (Mouse-ear cress)).